A 245-amino-acid chain; its full sequence is 1-(5-phosphoribosyl)-5-[(5-phosphoribosylamino)methylideneamino] imidazole-4-carboxamide isomerase (245 aa).

D8 acts as the Proton acceptor in catalysis. D129 serves as the catalytic Proton donor.

It belongs to the HisA/HisF family.

It is found in the cytoplasm. The enzyme catalyses 1-(5-phospho-beta-D-ribosyl)-5-[(5-phospho-beta-D-ribosylamino)methylideneamino]imidazole-4-carboxamide = 5-[(5-phospho-1-deoxy-D-ribulos-1-ylimino)methylamino]-1-(5-phospho-beta-D-ribosyl)imidazole-4-carboxamide. Its pathway is amino-acid biosynthesis; L-histidine biosynthesis; L-histidine from 5-phospho-alpha-D-ribose 1-diphosphate: step 4/9. This chain is 1-(5-phosphoribosyl)-5-[(5-phosphoribosylamino)methylideneamino] imidazole-4-carboxamide isomerase, found in Sinorhizobium fredii (strain NBRC 101917 / NGR234).